Here is a 91-residue protein sequence, read N- to C-terminus: Acylphosphatase (91 aa).

The Acylphosphatase-like domain occupies Arg-4–Tyr-91. Active-site residues include Arg-19 and Asn-37.

The protein belongs to the acylphosphatase family.

The enzyme catalyses an acyl phosphate + H2O = a carboxylate + phosphate + H(+). This chain is Acylphosphatase (acyP), found in Clostridium acetobutylicum (strain ATCC 824 / DSM 792 / JCM 1419 / IAM 19013 / LMG 5710 / NBRC 13948 / NRRL B-527 / VKM B-1787 / 2291 / W).